The sequence spans 396 residues: Cell adhesion molecule 3 (396 aa).

The signal sequence occupies residues 1–22; it reads MGAPSALPLLLLLACSWAPGGA. The 102-residue stretch at 23-124 folds into the Ig-like V-type domain; that stretch reads NLSQDDSQPW…VRTAKSLVTV (102 aa). Residues 23 to 328 lie on the Extracellular side of the membrane; it reads NLSQDDSQPW…PVPSSSSTYH (306 aa). 3 disulfides stabilise this stretch: Cys-48-Cys-108, Cys-150-Cys-207, and Cys-252-Cys-297. 2 Ig-like C2-type domains span residues 128-226 and 231-313; these read PQKP…QRIE and PTAM…FTLN. A glycan (N-linked (GlcNAc...) asparagine) is linked at Asn-288. Residues 329–349 traverse the membrane as a helical segment; sequence AIIGGIVAFIVFLLLILLIFL. Residues 350-396 lie on the Cytoplasmic side of the membrane; the sequence is GHYLIRHKGTYLTHEAKGSDDAPDADTAIINAEGGQSGGDDKKEYFI. Positions 365–396 are disordered; the sequence is AKGSDDAPDADTAIINAEGGQSGGDDKKEYFI. Ser-386 carries the phosphoserine modification.

This sequence belongs to the nectin family. As to quaternary structure, homodimer. Can form trans-heterodimers with NECTIN3. Interacts with EPB41L1, DLG3, PALS2 and CASK.

It is found in the cell membrane. The protein localises to the cell junction. Its function is as follows. Involved in cell-cell adhesion. Has both calcium-independent homophilic cell-cell adhesion activity and calcium-independent heterophilic cell-cell adhesion activity with IGSF4, NECTIN1 and NECTIN3. Interaction with EPB41L1 may regulate structure or function of cell-cell junctions. In Rattus norvegicus (Rat), this protein is Cell adhesion molecule 3 (Cadm3).